The sequence spans 294 residues: uncharacterized protein (294 aa).

3 disordered regions span residues Met-1–His-30, Ala-51–Pro-86, and Asp-250–Thr-294. Composition is skewed to polar residues over residues Gln-7–Lys-26, Pro-66–Thr-81, and Pro-255–Thr-277.

It localises to the nucleus. This is an uncharacterized protein from Schizosaccharomyces pombe (strain 972 / ATCC 24843) (Fission yeast).